Consider the following 417-residue polypeptide: UDP-N-acetylglucosamine 1-carboxyvinyltransferase (417 aa).

22 to 23 (KN) lines the phosphoenolpyruvate pocket. Arg-93 serves as a coordination point for UDP-N-acetyl-alpha-D-glucosamine. Cys-117 serves as the catalytic Proton donor. Cys-117 bears the 2-(S-cysteinyl)pyruvic acid O-phosphothioketal mark. Residues Asp-304 and Ile-326 each contribute to the UDP-N-acetyl-alpha-D-glucosamine site.

The protein belongs to the EPSP synthase family. MurA subfamily.

The protein localises to the cytoplasm. It carries out the reaction phosphoenolpyruvate + UDP-N-acetyl-alpha-D-glucosamine = UDP-N-acetyl-3-O-(1-carboxyvinyl)-alpha-D-glucosamine + phosphate. It functions in the pathway cell wall biogenesis; peptidoglycan biosynthesis. Cell wall formation. Adds enolpyruvyl to UDP-N-acetylglucosamine. This Neisseria gonorrhoeae (strain ATCC 700825 / FA 1090) protein is UDP-N-acetylglucosamine 1-carboxyvinyltransferase.